We begin with the raw amino-acid sequence, 597 residues long: Bile salt-activated lipase (597 aa).

The signal sequence occupies residues 1–18 (LGASRLGPSPGCLAVASA). An intrachain disulfide couples Cys82 to Cys98. Asn205 carries an N-linked (GlcNAc...) asparagine glycan. Residue Ser212 is the Acyl-ester intermediate of the active site. Cys264 and Cys275 are oxidised to a cystine. Asp338 (charge relay system) is an active-site residue. The N-linked (GlcNAc...) asparagine glycan is linked to Asn379. The active-site Charge relay system is the His453. Positions 553–591 (AGASLLPPEDNSQASPVPPADNSGAPTEPSAGDSEVAQM) are disordered.

This sequence belongs to the type-B carboxylesterase/lipase family. Interacts with CLC.

It is found in the secreted. The catalysed reaction is a triacylglycerol + H2O = a diacylglycerol + a fatty acid + H(+). It carries out the reaction 1,2,3-tri-(9Z-octadecenoyl)-glycerol + H2O = di-(9Z)-octadecenoylglycerol + (9Z)-octadecenoate + H(+). It catalyses the reaction 1,2,3-trioctanoylglycerol + H2O = dioctanoylglycerol + octanoate + H(+). The enzyme catalyses a sterol ester + H2O = a sterol + a fatty acid + H(+). The catalysed reaction is cholesteryl (9Z-octadecenoate) + H2O = cholesterol + (9Z)-octadecenoate + H(+). It carries out the reaction an acetyl ester + H2O = an aliphatic alcohol + acetate + H(+). It catalyses the reaction a butanoate ester + H2O = an aliphatic alcohol + butanoate + H(+). The enzyme catalyses 9-hexadecanoyloxy-octadecanoate + H2O = 9-hydroxy-octadecanoate + hexadecanoate + H(+). The catalysed reaction is 9-(9Z-octadecenoyloxy)-octadecanoate + H2O = 9-hydroxy-octadecanoate + (9Z)-octadecenoate + H(+). It carries out the reaction 1-hexadecanoyl-sn-glycero-3-phosphocholine + H2O = sn-glycerol 3-phosphocholine + hexadecanoate + H(+). It catalyses the reaction 12-hexadecanoyloxy-octadecanoate + H2O = 12-hydroxyoctadecanoate + hexadecanoate + H(+). The enzyme catalyses 12-(9Z-octadecenoyloxy)-octadecanoate + H2O = 12-hydroxyoctadecanoate + (9Z)-octadecenoate + H(+). The catalysed reaction is 13-(9Z-octadecenoyloxy)-octadecanoate + H2O = 13-hydroxy-octadecanoate + (9Z)-octadecenoate + H(+). It carries out the reaction 9-(9Z-hexadecenoyloxy)-octadecanoate + H2O = (9Z)-hexadecenoate + 9-hydroxy-octadecanoate + H(+). It catalyses the reaction 12-(9Z-hexadecenoyloxy)-octadecanoate + H2O = 12-hydroxyoctadecanoate + (9Z)-hexadecenoate + H(+). The enzyme catalyses 13-(9Z-hexadecenoyloxy)-octadecanoate + H2O = 13-hydroxy-octadecanoate + (9Z)-hexadecenoate + H(+). The catalysed reaction is 12-octadecanoyloxy-octadecanoate + H2O = 12-hydroxyoctadecanoate + octadecanoate + H(+). It carries out the reaction 13-octadecanoyloxy-octadecanoate + H2O = 13-hydroxy-octadecanoate + octadecanoate + H(+). It catalyses the reaction 5-(9Z-hexadecenoyloxy)-octadecanoate + H2O = 5-hydroxy-octadecanoate + (9Z)-hexadecenoate + H(+). The enzyme catalyses 9-octadecanoyloxy-octadecanoate + H2O = 9-hydroxy-octadecanoate + octadecanoate + H(+). Activated by bile salts such as sodium taurocholate. Functionally, catalyzes the hydrolysis of a wide range of substrates including cholesteryl esters, phospholipids, lysophospholipids, di- and tri-acylglycerols, and fatty acid esters of hydroxy fatty acids (FAHFA). Preferentially hydrolyzes FAHFAs with the ester bond further away from the carboxylate. Unsaturated FAHFAs are hydrolyzed more quickly than saturated FAHFAs. Has an essential role in the complete digestion of dietary lipids and their intestinal absorption, along with the absorption of fat-soluble vitamins. The polypeptide is Bile salt-activated lipase (CEL) (Bos taurus (Bovine)).